Here is a 147-residue protein sequence, read N- to C-terminus: Putative pre-16S rRNA nuclease (147 aa).

The protein belongs to the YqgF nuclease family.

It is found in the cytoplasm. Functionally, could be a nuclease involved in processing of the 5'-end of pre-16S rRNA. In Limosilactobacillus reuteri (strain DSM 20016) (Lactobacillus reuteri), this protein is Putative pre-16S rRNA nuclease.